The primary structure comprises 100 residues: RING finger protein Z (100 aa).

Gly-2 carries N-myristoyl glycine; by host lipidation. An RING-type; atypical zinc finger spans residues 43–79; the sequence is CRCCWFANTNLIKCSDHYICLKCLNIMLGKSSFCDIC. The short motif at 93 to 96 is the PTAP/PSAP motif element; sequence PSAP.

It belongs to the arenaviridae Z protein family. As to quaternary structure, interacts with protein NP; this interaction probably directs the encapsidated genome to budding sites. Interacts (via RING domain) with polymerase L; this interaction inhibits viral transcription and replication, Z partially blocks the product exit tunnel for the releasing nascent RNA product. Interacts with the glycoprotein complex; this interaction plays a role in virion budding. Interacts with host eIF4E; this interaction results in eIF4E reduced affinity for its substrate, the 5'-m7 G cap structure. Interacts (via late-budding domain) with host TSG101; this interaction is essential for budding and release of viral particles. Interacts with host RPLP0; this interaction may serve to load ribosome-like particles inside the virion. Interacts with host PML; this interaction induces PML bodies redistribution in the cytoplasm upon viral infection. Myristoylation is required for the role of RING finger protein Z in assembly and budding.

It localises to the virion. It is found in the host cytoplasm. The protein resides in the host perinuclear region. Its subcellular location is the host cell membrane. Plays a crucial role in virion assembly and budding. Expressed late in the virus life cycle, it acts as an inhibitor of viral transcription and RNA synthesis by interacting with the viral polymerase L. Presumably recruits the NP encapsidated genome to cellular membranes at budding sites via direct interaction with NP. Plays critical roles in the final steps of viral release by interacting with host TSG101, a member of the vacuolar protein-sorting pathway and using other cellular host proteins involved in vesicle formation pathway. The budding of the virus progeny occurs after association of protein Z with the viral glycoprotein complex SSP-GP1-GP2 at the cell periphery, step that requires myristoylation of protein Z. Also selectively represses protein production by associating with host eIF4E. In cell-based minigenome assay, has an inhibitory effect on the ribonucleoprotein machinery (vRNP), which is responsible for the replication and transcription of the viral genome. In Homo sapiens (Human), this protein is RING finger protein Z.